Here is a 98-residue protein sequence, read N- to C-terminus: Small ribosomal subunit protein uS19 (98 aa).

The protein belongs to the universal ribosomal protein uS19 family.

Its function is as follows. Protein S19 forms a complex with S13 that binds strongly to the 16S ribosomal RNA. This chain is Small ribosomal subunit protein uS19, found in Chlorobaculum parvum (strain DSM 263 / NCIMB 8327) (Chlorobium vibrioforme subsp. thiosulfatophilum).